Here is a 355-residue protein sequence, read N- to C-terminus: Putative cyclin-A3-1 (355 aa).

Belongs to the cyclin family. Cyclin AB subfamily.

This is Putative cyclin-A3-1 (CYCA3-1) from Arabidopsis thaliana (Mouse-ear cress).